We begin with the raw amino-acid sequence, 161 residues long: 2-C-methyl-D-erythritol 2,4-cyclodiphosphate synthase (161 aa).

Positions 9 and 11 each coordinate a divalent metal cation. Residues 9–11 (DFH) and 37–38 (HS) each bind 4-CDP-2-C-methyl-D-erythritol 2-phosphate. Histidine 45 serves as a coordination point for a divalent metal cation. 4-CDP-2-C-methyl-D-erythritol 2-phosphate is bound by residues 59–61 (DIG), 64–68 (FPDTD), 135–138 (TTTE), and arginine 145.

Belongs to the IspF family. Homotrimer. It depends on a divalent metal cation as a cofactor.

It catalyses the reaction 4-CDP-2-C-methyl-D-erythritol 2-phosphate = 2-C-methyl-D-erythritol 2,4-cyclic diphosphate + CMP. Its pathway is isoprenoid biosynthesis; isopentenyl diphosphate biosynthesis via DXP pathway; isopentenyl diphosphate from 1-deoxy-D-xylulose 5-phosphate: step 4/6. Involved in the biosynthesis of isopentenyl diphosphate (IPP) and dimethylallyl diphosphate (DMAPP), two major building blocks of isoprenoid compounds. Catalyzes the conversion of 4-diphosphocytidyl-2-C-methyl-D-erythritol 2-phosphate (CDP-ME2P) to 2-C-methyl-D-erythritol 2,4-cyclodiphosphate (ME-CPP) with a corresponding release of cytidine 5-monophosphate (CMP). The protein is 2-C-methyl-D-erythritol 2,4-cyclodiphosphate synthase of Leptospira interrogans serogroup Icterohaemorrhagiae serovar Lai (strain 56601).